A 383-amino-acid polypeptide reads, in one-letter code: Gap junction alpha-1 protein (383 aa).

At 2-23 (GDWSALGKLLDKVQAYSTAGGK) the chain is on the cytoplasmic side. Ser5 is subject to Phosphoserine. The chain crosses the membrane as a helical span at residues 24–44 (VWLSVLFIFRILLLGTAVESA). At 45–76 (WGDEQSAFRCNTQQPGCENVCYDKSFPISHVR) the chain is on the extracellular side. 2 disulfide bridges follow: Cys54/Cys193 and Cys188/Cys199. The chain crosses the membrane as a helical span at residues 77–97 (FWVLQIIFVSVPTLLYLAHVF). The Cytoplasmic portion of the chain corresponds to 98-156 (YVMRKEEKLNKKEEELKVVAQTDGANVDMHLKQIEIKKFKYGIEEHGKVKMRGGLLRTY). A Glycyl lysine isopeptide (Lys-Gly) (interchain with G-Cter in SUMO) cross-link involves residue Lys145. A helical membrane pass occupies residues 157-177 (IISILFKSVFEVAFLLIQWYI). Over 178 to 208 (YGFSLSAVYTCKRDPCPHQVDCFLSRPTEKT) the chain is Extracellular. The chain crosses the membrane as a helical span at residues 209 to 229 (IFIIFMLVVSLVSLALNIIEL). Residues 230–383 (FYVFFKGVKD…SRPRPDDLEI (154 aa)) lie on the Cytoplasmic side of the membrane. Residue Lys238 forms a Glycyl lysine isopeptide (Lys-Gly) (interchain with G-Cter in SUMO) linkage. Residues 245-383 (SDPYHTTTGP…SRPRPDDLEI (139 aa)) form an interaction with NOV region. Tyr248 is modified (phosphotyrosine). Phosphoserine occurs at positions 256, 258, and 263. The interval 265–383 (KYAYFNGCSS…SRPRPDDLEI (119 aa)) is interaction with UBQLN4. The residue at position 272 (Cys272) is an S-nitrosocysteine. Thr276 carries the post-translational modification Phosphothreonine. Ser307 and Ser315 each carry phosphoserine. Residues 318–333 (QNRMGQAGSTISNSHA) show a composition bias toward polar residues. A disordered region spans residues 318-383 (QNRMGQAGST…SRPRPDDLEI (66 aa)). Ser326 carries the post-translational modification Phosphoserine; by CK1. A Phosphothreonine modification is found at Thr327. Phosphoserine; by CK1 occurs at positions 329 and 331. The span at 339–352 (PDDHQNSKKLDAGH) shows a compositional bias: basic and acidic residues. Phosphoserine is present on residues Ser345 and Ser366. Residues 363–375 (RPSSRASSRASSR) show a composition bias toward low complexity. Ser369 is modified (phosphoserine; by PKC/PRKCG and PKC/PRKCD). Phosphoserine is present on residues Ser370 and Ser374.

The protein belongs to the connexin family. Alpha-type (group II) subfamily. A connexon is composed of a hexamer of connexins. Interacts with SGSM3. Interacts with RIC1/CIP150. Interacts with CNST and CSNK1D. Interacts (via C-terminus) with TJP1. Interacts (via C-terminus) with SRC (via SH3 domain). Interacts (not ubiquitinated) with UBQLN4 (via UBA domain). Interacts with NOV. Interacts with TMEM65. Interacts with ANK3/ANKG and PKP2. In terms of processing, phosphorylation at Ser-326, Ser-329 and Ser-331 by CK1 modulates gap junction assembly. Phosphorylated at Ser-369 by PRKCG; phosphorylation induces disassembly of gap junction plaques and inhibition of gap junction activity. Phosphorylation at Ser-369 by PRKCD triggers its internalization into small vesicles leading to proteasome-mediated degradation. Post-translationally, sumoylated with SUMO1, SUMO2 and SUMO3, which may regulate the level of functional Cx43 gap junctions at the plasma membrane. May be desumoylated by SENP1 or SENP2. Acetylated in the developing cortex; leading to delocalization from the cell membrane.

It localises to the cell membrane. The protein localises to the cell junction. The protein resides in the gap junction. It is found in the endoplasmic reticulum. In terms of biological role, gap junction protein that acts as a regulator of bladder capacity. A gap junction consists of a cluster of closely packed pairs of transmembrane channels, the connexons, through which materials of low MW diffuse from one cell to a neighboring cell. May play a critical role in the physiology of hearing by participating in the recycling of potassium to the cochlear endolymph. Negative regulator of bladder functional capacity: acts by enhancing intercellular electrical and chemical transmission, thus sensitizing bladder muscles to cholinergic neural stimuli and causing them to contract. May play a role in cell growth inhibition through the regulation of NOV expression and localization. Plays an essential role in gap junction communication in the ventricles. The sequence is that of Gap junction alpha-1 protein (GJA1) from Bos taurus (Bovine).